The following is a 387-amino-acid chain: Succinate--CoA ligase [ADP-forming] subunit beta (387 aa).

Residues 9-245 enclose the ATP-grasp domain; sequence KDLLESYGLK…KSQENAKELK (237 aa). ATP is bound by residues Lys-46, 53–55, Glu-100, Tyr-103, and Glu-108; that span reads GRG. 2 residues coordinate Mg(2+): Asn-200 and Asp-214. Residues Asn-265 and 322–324 contribute to the substrate site; that span reads GIV.

This sequence belongs to the succinate/malate CoA ligase beta subunit family. In terms of assembly, heterotetramer of two alpha and two beta subunits. Requires Mg(2+) as cofactor.

It carries out the reaction succinate + ATP + CoA = succinyl-CoA + ADP + phosphate. The enzyme catalyses GTP + succinate + CoA = succinyl-CoA + GDP + phosphate. It functions in the pathway carbohydrate metabolism; tricarboxylic acid cycle; succinate from succinyl-CoA (ligase route): step 1/1. Succinyl-CoA synthetase functions in the citric acid cycle (TCA), coupling the hydrolysis of succinyl-CoA to the synthesis of either ATP or GTP and thus represents the only step of substrate-level phosphorylation in the TCA. The beta subunit provides nucleotide specificity of the enzyme and binds the substrate succinate, while the binding sites for coenzyme A and phosphate are found in the alpha subunit. In Francisella tularensis subsp. tularensis (strain FSC 198), this protein is Succinate--CoA ligase [ADP-forming] subunit beta.